Consider the following 96-residue polypeptide: Large ribosomal subunit protein bL27 (96 aa).

The propeptide occupies 1 to 9 (MLRLDLQFF).

Belongs to the bacterial ribosomal protein bL27 family. The N-terminus is cleaved by ribosomal processing cysteine protease Prp.

This chain is Large ribosomal subunit protein bL27, found in Geobacillus kaustophilus (strain HTA426).